The chain runs to 791 residues: Diacylglycerol kinase gamma (791 aa).

2 disordered regions span residues 82 to 103 (KPRH…ANSA) and 117 to 154 (DEAC…SSSS). Basic and acidic residues predominate over residues 83–92 (PRHETSDHPT). Positions 94–103 (GASNSEANSA) are enriched in polar residues. 2 consecutive EF-hand domains span residues 175–210 (RPQD…MLHI) and 220–255 (ELRP…TIPL). Residues D188, D190, N192, E199, D233, D235, D237, and E244 each coordinate Ca(2+). Phorbol-ester/DAG-type zinc fingers lie at residues 271–321 (RHAW…IPGC) and 336–385 (QHAW…LCDG). One can recognise a DAGKc domain in the interval 430–564 (PGTHPLLVLV…LDRWHLEVIP (135 aa)). The disordered stretch occupies residues 768-791 (APMMMGPPQKSSFFSLRRKSRSKD).

Belongs to the eukaryotic diacylglycerol kinase family. As to expression, predominantly expressed in retina and in a much lesser extent in the brain. Other tissues contain extremely low levels of DGK-gamma.

The protein resides in the membrane. It is found in the cytoplasm. It localises to the cytosol. Its subcellular location is the cytoskeleton. It carries out the reaction a 1,2-diacyl-sn-glycerol + ATP = a 1,2-diacyl-sn-glycero-3-phosphate + ADP + H(+). The catalysed reaction is 1,2-didecanoyl-sn-glycerol + ATP = 1,2-didecanoyl-sn-glycero-3-phosphate + ADP + H(+). It catalyses the reaction 1-octadecanoyl-2-(5Z,8Z,11Z,14Z-eicosatetraenoyl)-sn-glycerol + ATP = 1-octadecanoyl-2-(5Z,8Z,11Z,14Z-eicosatetraenoyl)-sn-glycero-3-phosphate + ADP + H(+). The enzyme catalyses 1,2-di-(9Z-octadecenoyl)-sn-glycerol + ATP = 1,2-di-(9Z-octadecenoyl)-sn-glycero-3-phosphate + ADP + H(+). It carries out the reaction 1-octadecanoyl-2-(9Z,12Z)-octadecadienoyl-sn-glycerol + ATP = 1-octadecanoyl-2-(9Z,12Z-octadecadienoyl)-sn-glycero-3-phosphate + ADP + H(+). It participates in lipid metabolism; glycerolipid metabolism. Its activity is regulated as follows. The activity is calcium-dependent. Requires phosphatidylserine for maximal activity. Diacylglycerol kinase that converts diacylglycerol/DAG into phosphatidic acid/phosphatidate/PA and regulates the respective levels of these two bioactive lipids. Thereby, acts as a central switch between the signaling pathways activated by these second messengers with different cellular targets and opposite effects in numerous biological processes. Has no apparent specificity with regard to the acyl compositions of diacylglycerol. Specifically expressed in the cerebellum where it controls the level of diacylglycerol which in turn regulates the activity of protein kinase C gamma. Through protein kinase C gamma, indirectly regulates the dendritic development of Purkinje cells, cerebellar long term depression and ultimately cerebellar motor coordination. The sequence is that of Diacylglycerol kinase gamma (DGKG) from Homo sapiens (Human).